The primary structure comprises 1215 residues: Cellulose synthase-like protein D4 (1215 aa).

Disordered stretches follow at residues 24 to 46 (GGDAVVRRGSGLTSPVPRHSLGS) and 206 to 231 (SDTDESDSVTDDDDDEAVSSSEERDQ). The span at 207–222 (DTDESDSVTDDDDDEA) shows a compositional bias: acidic residues. The next 2 membrane-spanning stretches (helical) occupy residues 321–341 (AILSPYRLLIAIRLVALGFFL) and 352–372 (AVWLWAMSVACEVWFAFSWLL). Active-site residues include aspartate 452 and aspartate 905. The next 6 helical transmembrane spans lie at 988–1008 (VFLLAYCLLPAVSLFSGKFIV), 1014–1034 (TFLAFLLVITLTLCLLALLEI), 1060–1080 (PAAVLQGLLKVIAGVDISFTL), 1114–1134 (LMVPPVTIMMVNAVAIAVAAA), 1147–1167 (LLGGAFFSFWVLCHLYPFAKG), and 1177–1197 (TIVFVWSGLISMIISLLWVYI).

The protein belongs to the glycosyltransferase 2 family. Plant cellulose synthase-like D subfamily.

The protein localises to the golgi apparatus membrane. Functionally, thought to be a Golgi-localized beta-glycan synthase that polymerize the backbones of noncellulosic polysaccharides (hemicelluloses) of plant cell wall. This chain is Cellulose synthase-like protein D4 (CSLD4), found in Oryza sativa subsp. japonica (Rice).